Consider the following 396-residue polypeptide: Elongation factor Tu (396 aa).

Residues Lys10–Glu206 enclose the tr-type G domain. Residues Gly19–Thr26 are G1. Residue Gly19–Thr26 participates in GTP binding. Thr26 is a Mg(2+) binding site. The interval Gly60 to Asn64 is G2. A G3 region spans residues Asp81–Gly84. Residues Asp81–His85 and Asn136–Asp139 each bind GTP. The G4 stretch occupies residues Asn136 to Asp139. Residues Ser174–Lys176 form a G5 region.

Belongs to the TRAFAC class translation factor GTPase superfamily. Classic translation factor GTPase family. EF-Tu/EF-1A subfamily. In terms of assembly, monomer.

The protein resides in the cytoplasm. It carries out the reaction GTP + H2O = GDP + phosphate + H(+). Functionally, GTP hydrolase that promotes the GTP-dependent binding of aminoacyl-tRNA to the A-site of ribosomes during protein biosynthesis. In Janthinobacterium sp. (strain Marseille) (Minibacterium massiliensis), this protein is Elongation factor Tu.